The chain runs to 299 residues: Probable lipid kinase YegS (299 aa).

Residues alanine 2–threonine 133 form the DAGKc domain. Residues threonine 40, glycine 66–glutamate 72, and threonine 95 contribute to the ATP site. The Mg(2+) site is built by leucine 215, aspartate 218, and leucine 220. Glutamate 271 acts as the Proton acceptor in catalysis.

The protein belongs to the diacylglycerol/lipid kinase family. YegS lipid kinase subfamily. Mg(2+) serves as cofactor. Requires Ca(2+) as cofactor.

It localises to the cytoplasm. Its function is as follows. Probably phosphorylates lipids; the in vivo substrate is unknown. This is Probable lipid kinase YegS from Escherichia coli O127:H6 (strain E2348/69 / EPEC).